A 64-amino-acid polypeptide reads, in one-letter code: Large ribosomal subunit protein bL35 (64 aa).

Residues Met1 to His23 form a disordered region.

The protein belongs to the bacterial ribosomal protein bL35 family.

This is Large ribosomal subunit protein bL35 from Stutzerimonas stutzeri (strain A1501) (Pseudomonas stutzeri).